The chain runs to 662 residues: Glycogen debranching enzyme (662 aa).

The active-site Nucleophile is Asp338. Glu373 (proton donor) is an active-site residue.

It belongs to the glycosyl hydrolase 13 family.

The enzyme catalyses Hydrolysis of (1-&gt;6)-alpha-D-glucosidic linkages to branches with degrees of polymerization of three or four glucose residues in limit dextrin.. Its pathway is glycan degradation; glycogen degradation. In terms of biological role, removes maltotriose and maltotetraose chains that are attached by 1,6-alpha-linkage to the limit dextrin main chain, generating a debranched limit dextrin. This chain is Glycogen debranching enzyme, found in Yersinia pseudotuberculosis serotype O:1b (strain IP 31758).